The following is a 212-amino-acid chain: Ribosomal RNA small subunit methyltransferase G (212 aa).

S-adenosyl-L-methionine-binding positions include Gly-80, Leu-85, 131–132 (AE), and Arg-146.

Belongs to the methyltransferase superfamily. RNA methyltransferase RsmG family.

Its subcellular location is the cytoplasm. It carries out the reaction guanosine(527) in 16S rRNA + S-adenosyl-L-methionine = N(7)-methylguanosine(527) in 16S rRNA + S-adenosyl-L-homocysteine. Its function is as follows. Specifically methylates the N7 position of guanine in position 527 of 16S rRNA. The protein is Ribosomal RNA small subunit methyltransferase G of Xanthomonas oryzae pv. oryzae (strain KACC10331 / KXO85).